The chain runs to 213 residues: Guanylate kinase (213 aa).

Residues 6–186 (GLLIILSSPS…TEERLKTIVS (181 aa)) enclose the Guanylate kinase-like domain. 13-20 (SPSGAGKS) is an ATP binding site.

The protein belongs to the guanylate kinase family.

The protein resides in the cytoplasm. The enzyme catalyses GMP + ATP = GDP + ADP. Its function is as follows. Essential for recycling GMP and indirectly, cGMP. This chain is Guanylate kinase, found in Ruegeria pomeroyi (strain ATCC 700808 / DSM 15171 / DSS-3) (Silicibacter pomeroyi).